A 620-amino-acid polypeptide reads, in one-letter code: MYND-type zinc finger protein MUB1 (620 aa).

The MYND-type; degenerate zinc-finger motif lies at 514-555; the sequence is NFSCGKWEDFPRQFAKCRRCKRTKYCSRKCQLKAWGYHRYWC. 4 residues coordinate Zn(2+): Cys530, Cys533, His551, and Cys555. Over residues 563-606 the composition is skewed to polar residues; the sequence is MRSTNTTTGVNTPNEPSSLNATATTAADVSNSTSTFTPNISTTV. The tract at residues 563 to 620 is disordered; sequence MRSTNTTTGVNTPNEPSSLNATATTAADVSNSTSTFTPNISTTVPDEISNRDENSIPE. Over residues 610–620 the composition is skewed to basic and acidic residues; the sequence is ISNRDENSIPE.

This sequence belongs to the MUB1/samB family. In terms of assembly, interacts with UBR2 and RPN4.

The protein localises to the cytoplasm. Its function is as follows. Involved in the determination of the onset of polarized growth. Required for the ubiquitin-dependent degradation of RPN4. Cooperates with UBR2 to transfer ubiquitin from RAD6 to RPN4. This is MYND-type zinc finger protein MUB1 (MUB1) from Saccharomyces cerevisiae (strain ATCC 204508 / S288c) (Baker's yeast).